Reading from the N-terminus, the 564-residue chain is Quinone-dependent D-lactate dehydrogenase (564 aa).

Residues Gly36–Val207 form the FAD-binding PCMH-type domain. Residues Ala70–Gly74, Gly78–Ser79, Gly137, Ser144, Gly154, and Val256 each bind FAD.

It belongs to the quinone-dependent D-lactate dehydrogenase family. It depends on FAD as a cofactor.

The protein resides in the cell inner membrane. The catalysed reaction is (R)-lactate + a quinone = a quinol + pyruvate. Functionally, catalyzes the oxidation of D-lactate to pyruvate. The protein is Quinone-dependent D-lactate dehydrogenase of Haemophilus influenzae (strain ATCC 51907 / DSM 11121 / KW20 / Rd).